The following is a 466-amino-acid chain: Rhodanese-like domain-containing protein 4, chloroplastic (466 aa).

Residues 1–15 (MEALKTATFSPMSVL) constitute a chloroplast transit peptide. The segment at 1–35 (MEALKTATFSPMSVLSEKRSEPRKPFSLPNLFPPK) is disordered. The transit peptide at 16–69 (SEKRSEPRKPFSLPNLFPPKSQRPISQESFLKRFNGGLALLTSVLSSATAPAKS) directs the protein to the thylakoid. The helical transmembrane segment at 103-123 (PLVIAGGVAALAVPFVLSQVL) threads the bilayer. Positions 144–250 (TDDNAQLLDI…WLNSSLPWIE (107 aa)) constitute a Rhodanese domain. A helical transmembrane segment spans residues 277–297 (VSVALGVAAAAGLSVFAFTEI). A compositionally biased stretch (low complexity) spans 373–384 (EAESATATTTTV). 2 disordered regions span residues 373–392 (EAES…PEPE) and 426–466 (AQVI…PSQP). Over residues 455–466 (LKPPSSPMPSQP) the composition is skewed to pro residues.

In terms of assembly, component of high molecular weight thylakoid LFNRs-containing protein complexes containing LIR1, LFNR1, LFNR2, TIC62 and TROL proteins. Expressed in leaves and stems, and at lower levels in flowers and siliques (at protein level).

Its subcellular location is the plastid. The protein resides in the chloroplast envelope. It is found in the chloroplast thylakoid membrane. In terms of biological role, rhodanese domain-containing protein required for anchoring ferredoxin--NADP reductase to the thylakoid membranes and sustaining efficient linear electron flow (LEF). The protein is Rhodanese-like domain-containing protein 4, chloroplastic of Arabidopsis thaliana (Mouse-ear cress).